The primary structure comprises 85 residues: Scratcher peptide (85 aa).

A signal peptide spans 1–24 (MTSVQSVTCCCLLWLMLSVQPITP). A propeptide spanning residues 25–38 (GSPGPAQLSRERSF) is cleaved from the precursor. At glutamate 47 the chain carries 4-carboxyglutamate. An Aspartic acid 1-amide modification is found at aspartate 67. Residues 68-85 (KRDVVSPRIRRRKRSKAM) constitute a propeptide that is removed on maturation.

This sequence belongs to the conotoxin J superfamily. In terms of processing, contains 2 disulfide bonds. In terms of tissue distribution, expressed by the venom duct.

It localises to the secreted. Its function is as follows. Causes scratching in mice. In Conus geographus (Geography cone), this protein is Scratcher peptide.